The chain runs to 844 residues: 3',5'-cyclic-AMP phosphodiesterase 4A (844 aa).

Positions 1–124 are disordered; that stretch reads MEPPAAPSER…RSPLDSQASP (124 aa). A Phosphoserine modification is found at serine 13. Over residues 36–46 the composition is skewed to low complexity; it reads QPRTPIRIQQR. Over residues 51–78 the composition is skewed to basic and acidic residues; sequence SAERSETERSPHRPIERADAVDTGDRPG. A compositionally biased stretch (polar residues) spans 82 to 91; that stretch reads TRMSWPSSFH. At serine 147 the chain carries Phosphoserine; by MAPKAPK2. Serine 152, serine 160, and serine 204 each carry phosphoserine. The segment at 296–317 is disordered; sequence PSPTPRQRAFQQPPPSVLRQSQ. Position 333 is a phosphoserine (serine 333). In terms of domain architecture, PDEase spans 343–672; sequence VKTDQEDLLA…DWYHSAIRQS (330 aa). Lysine 344 is covalently cross-linked (Glycyl lysine isopeptide (Lys-Gly) (interchain with G-Cter in SUMO)). Residue histidine 419 is the Proton donor of the active site. Residue histidine 419 coordinates 3',5'-cyclic AMP. Histidine 419 and histidine 423 together coordinate AMP. Positions 423, 459, 460, and 577 each coordinate Zn(2+). AMP contacts are provided by aspartate 460, aspartate 577, glutamine 628, and phenylalanine 631. Aspartate 460 contributes to the Mg(2+) binding site. Residue aspartate 460 coordinates Mn(2+). 2 residues coordinate 3',5'-cyclic AMP: glutamine 628 and phenylalanine 631. Disordered stretches follow at residues 668–690 and 818–844; these read AIRQSPSPPLEEEPGGLGHPSLP and SACSGTSGDNSAIISAPGRWGSGGDPA. Residues serine 672 and serine 674 each carry the phosphoserine modification. A compositionally biased stretch (polar residues) spans 820-830; sequence CSGTSGDNSAI.

It belongs to the cyclic nucleotide phosphodiesterase family. PDE4 subfamily. In terms of assembly, interacts with LYN (via SH3 domain). Interacts with ARRB2. The cofactor is Zn(2+). Mg(2+) serves as cofactor. Mn(2+) is required as a cofactor. Phosphorylated by MAPKAPK2 at Ser-147; it counteracts PKA-induced activation of PDE4A and modulates intracellular cAMP levels. Likely involved in cellular desensitization to cAMP signaling. In terms of processing, proteolytically cleaved by CASP3. As to expression, isoform 2 is testis specific.

Its subcellular location is the cytoplasm. It is found in the cytosol. The protein localises to the membrane. It catalyses the reaction 3',5'-cyclic AMP + H2O = AMP + H(+). It functions in the pathway purine metabolism; 3',5'-cyclic AMP degradation; AMP from 3',5'-cyclic AMP: step 1/1. Inhibited by rolipram. In terms of biological role, hydrolyzes the second messenger 3',5'-cyclic AMP (cAMP), which is a key regulator of many important physiological processes. Functionally, efficiently hydrolyzes cAMP. In Rattus norvegicus (Rat), this protein is 3',5'-cyclic-AMP phosphodiesterase 4A (Pde4a).